The primary structure comprises 321 residues: N-acetyl-gamma-glutamyl-phosphate reductase (321 aa).

Cys-131 is a catalytic residue.

This sequence belongs to the NAGSA dehydrogenase family. Type 1 subfamily.

It localises to the cytoplasm. The enzyme catalyses N-acetyl-L-glutamate 5-semialdehyde + phosphate + NADP(+) = N-acetyl-L-glutamyl 5-phosphate + NADPH + H(+). Its pathway is amino-acid biosynthesis; L-arginine biosynthesis; N(2)-acetyl-L-ornithine from L-glutamate: step 3/4. Its function is as follows. Catalyzes the NADPH-dependent reduction of N-acetyl-5-glutamyl phosphate to yield N-acetyl-L-glutamate 5-semialdehyde. This is N-acetyl-gamma-glutamyl-phosphate reductase from Christiangramia forsetii (strain DSM 17595 / CGMCC 1.15422 / KT0803) (Gramella forsetii).